The primary structure comprises 442 residues: tRNA modification GTPase MnmE (442 aa).

3 residues coordinate (6S)-5-formyl-5,6,7,8-tetrahydrofolate: arginine 22, glutamate 79, and lysine 118. The TrmE-type G domain occupies 215 to 365; it reads EIPIAIVGRP…LEKAILFEYQ (151 aa). Asparagine 225 serves as a coordination point for K(+). Residues 225–230, 244–250, and 269–272 each bind GTP; these read NVGKSS, TNIEGTT, and DTAG. Serine 229 serves as a coordination point for Mg(2+). K(+) contacts are provided by threonine 244, isoleucine 246, and threonine 249. Residue threonine 250 participates in Mg(2+) binding. Lysine 442 is a (6S)-5-formyl-5,6,7,8-tetrahydrofolate binding site.

This sequence belongs to the TRAFAC class TrmE-Era-EngA-EngB-Septin-like GTPase superfamily. TrmE GTPase family. In terms of assembly, homodimer. Heterotetramer of two MnmE and two MnmG subunits. Requires K(+) as cofactor.

The protein localises to the cytoplasm. Exhibits a very high intrinsic GTPase hydrolysis rate. Involved in the addition of a carboxymethylaminomethyl (cmnm) group at the wobble position (U34) of certain tRNAs, forming tRNA-cmnm(5)s(2)U34. This chain is tRNA modification GTPase MnmE, found in Mycoplasmopsis pulmonis (strain UAB CTIP) (Mycoplasma pulmonis).